Here is a 389-residue protein sequence, read N- to C-terminus: MAGLQRLASHLPVGVMLPHNTTEAPGPHSAKQDSYEQGDSSQQSLKGHLRNNFQKQLLSNKELTLDKVYTHPKWNTHTKARSYSYPHCTGISQQDPESDSQGQGKGLFYSSGPQSWYPKANNQDFIPFTKKRVGVDRAYPLKPVVHRKSCSTGEAGTDGYHNVYPRPPEPREFSSRNFGVRNQGNFSVVGTVLAAMQAEKAVANFDRTEWVQIRRLEAAGESLEEEIRRKQILLRGKLKKTEEELRRIQMQKEQAKENENRELQKIILPRSRVKGNNSNTMYKPIFSPEFEFEEEFSRDRREDETWGRSQQNSSPFQLSDYRIQRLKRERLVASNNKIQDRVSELSVEKFSLPSETPGGALQGSARNSSLSMAPDSSGSSGSIEEPQLG.

2 disordered regions span residues 16-44 and 84-115; these read MLPH…SQQS and SYPH…GPQS. 2 stretches are compositionally biased toward polar residues: residues 35 to 44 and 90 to 102; these read YEQGDSSQQS and GISQ…DSQG. Residues 211–266 adopt a coiled-coil conformation; sequence VQIRRLEAAGESLEEEIRRKQILLRGKLKKTEEELRRIQMQKEQAKENENRELQKI. Disordered stretches follow at residues 301 to 320 and 343 to 389; these read REDE…QLSD and SELS…PQLG. Residues 307 to 317 are compositionally biased toward polar residues; sequence GRSQQNSSPFQ. A compositionally biased stretch (low complexity) spans 368-382; sequence SSLSMAPDSSGSSGS.

Belongs to the ZC2HC1 family.

The chain is Zinc finger C2HC domain-containing protein 1C homolog (ZC2HC1C) from Pongo abelii (Sumatran orangutan).